The chain runs to 44 residues: Photosystem II reaction center protein K (44 aa).

Residues 1-7 constitute a propeptide that is removed on maturation; that stretch reads MTTLLLA. A helical transmembrane segment spans residues 19–39; that stretch reads IVDVLPVIPLLFLLLAFVWQA.

This sequence belongs to the PsbK family. PSII is composed of 1 copy each of membrane proteins PsbA, PsbB, PsbC, PsbD, PsbE, PsbF, PsbH, PsbI, PsbJ, PsbK, PsbL, PsbM, PsbT, PsbX, PsbY, PsbZ, Psb30/Ycf12, at least 3 peripheral proteins of the oxygen-evolving complex and a large number of cofactors. It forms dimeric complexes.

It is found in the plastid. The protein localises to the chloroplast thylakoid membrane. Its function is as follows. One of the components of the core complex of photosystem II (PSII). PSII is a light-driven water:plastoquinone oxidoreductase that uses light energy to abstract electrons from H(2)O, generating O(2) and a proton gradient subsequently used for ATP formation. It consists of a core antenna complex that captures photons, and an electron transfer chain that converts photonic excitation into a charge separation. In Tupiella akineta (Green alga), this protein is Photosystem II reaction center protein K.